We begin with the raw amino-acid sequence, 201 residues long: Ubiquinone biosynthesis accessory factor UbiJ (201 aa).

The SCP2 domain occupies 15–112; that stretch reads LNTFLYRSPA…QVVQNFVALA (98 aa).

This sequence belongs to the UbiJ family.

It localises to the cytoplasm. It participates in cofactor biosynthesis; ubiquinone biosynthesis. Its function is as follows. Required for ubiquinone (coenzyme Q) biosynthesis under aerobic conditions. Binds hydrophobic ubiquinone biosynthetic intermediates via its SCP2 domain and is essential for the stability of the Ubi complex. May constitute a docking platform where Ubi enzymes assemble and access their SCP2-bound polyprenyl substrates. Required for intracellular proliferation in macrophages. The polypeptide is Ubiquinone biosynthesis accessory factor UbiJ (Salmonella typhimurium (strain LT2 / SGSC1412 / ATCC 700720)).